The primary structure comprises 288 residues: Small ribosomal subunit protein uS15m (288 aa).

Residues 1–50 (MRLFEGAFQPWKLASTNLMQQCLLLNKKSQFHTTCILQGLKKQKANQRRK) constitute a mitochondrion transit peptide.

This sequence belongs to the universal ribosomal protein uS15 family. As to quaternary structure, component of the mitochondrial small ribosomal subunit (mt-SSU). Mature yeast 74S mitochondrial ribosomes consist of a small (37S) and a large (54S) subunit. The 37S small subunit contains a 15S ribosomal RNA (15S mt-rRNA) and at least 32 different proteins. The 54S large subunit contains a 21S rRNA (21S mt-rRNA) and at least 45 different proteins.

Its subcellular location is the mitochondrion. In terms of biological role, component of the mitochondrial ribosome (mitoribosome), a dedicated translation machinery responsible for the synthesis of mitochondrial genome-encoded proteins, including at least some of the essential transmembrane subunits of the mitochondrial respiratory chain. The mitoribosomes are attached to the mitochondrial inner membrane and translation products are cotranslationally integrated into the membrane. In Schizosaccharomyces pombe (strain 972 / ATCC 24843) (Fission yeast), this protein is Small ribosomal subunit protein uS15m (mrps28).